We begin with the raw amino-acid sequence, 1960 residues long: [F-actin]-monooxygenase MICAL3 (1960 aa).

Residues 2–494 are monooxygenase domain; sequence EESKNEATNR…RHLYDTGDTK (493 aa). FAD is bound by residues Cys97, 116–118, 123–125, Phe183, Tyr298, and Asp398; these read EKR and RNN. The Calponin-homology (CH) domain maps to 518–624; the sequence is VARSSKLLGW…YLTQFYEMFK (107 aa). Ser649 is modified (phosphoserine). The tract at residues 658–704 is disordered; that stretch reads GQTISRKRSPKDKKEKDLDGAGKRRKTSQSEEEDTPRGHRGARPTLV. Basic and acidic residues predominate over residues 669 to 679; it reads DKKEKDLDGAG. 2 positions are modified to phosphoserine: Ser685 and Ser687. Residues 762 to 824 form the LIM zinc-binding domain; that stretch reads DTCYFCQKRV…KPHYCYRLSG (63 aa). Residues Cys764, Cys767, His785, Cys788, Cys791, Cys794, Cys814, and His817 each coordinate Zn(2+). Disordered regions lie at residues 826–887 and 906–1295; these read AQRK…LRGT and LEEV…EALK. Thr887 carries the post-translational modification Phosphothreonine. Ser971 is subject to Phosphoserine. Residues 984-1014 are compositionally biased toward acidic residues; the sequence is GEEEEEDEEDEEEEEEEEDEEDEEEDEDESS. Basic and acidic residues-rich tracts occupy residues 1039-1051 and 1072-1084; these read HWTH…EERA and DVDS…KGEA. Phosphoserine occurs at positions 1129, 1139, 1156, and 1188. 2 stretches are compositionally biased toward pro residues: residues 1192–1203 and 1217–1233; these read SPLPEPSTPPAE and RTPP…PPTQ. Ser1250 is modified (phosphoserine). Thr1252 carries the post-translational modification Phosphothreonine. Phosphoserine is present on residues Ser1254, Ser1286, and Ser1313. Over residues 1277–1286 the composition is skewed to polar residues; sequence QGVTKDTLGS. 2 disordered regions span residues 1316-1550 and 1564-1782; these read LTPV…KRGL and RMRA…EEEL. Residue Thr1317 is modified to Phosphothreonine. Residues 1379 to 1393 are compositionally biased toward basic and acidic residues; sequence PDREPKGPREEHRDL. The span at 1394 to 1406 shows a compositional bias: low complexity; it reads SSSSGLGLQGSSS. Ser1404 is subject to Phosphoserine. Positions 1407-1425 are enriched in polar residues; sequence RTRTPGSQSFNTSDSTMLT. Thr1425 carries the phosphothreonine modification. The segment covering 1485–1503 has biased composition (acidic residues); the sequence is SVDEIPFADDVEDTYDDNT. Low complexity predominate over residues 1594–1611; it reads AAAAPRTPRTPAPRRATA. Residues 1616-1627 are compositionally biased toward basic and acidic residues; the sequence is GPEEPAPRHEAT. Residues 1633–1653 show a composition bias toward low complexity; the sequence is SPPSDSGGPDGSVTSSEGSSG. A compositionally biased stretch (basic residues) spans 1654–1672; the sequence is KSKKRSSLFSPRRSKKEKK. Ser1660 and Ser1663 each carry phosphoserine. Positions 1718–1727 are enriched in polar residues; the sequence is CPSTPSSGTT. The span at 1762 to 1778 shows a compositional bias: basic and acidic residues; sequence VLERTSQKSRKEPRTYT. The stretch at 1779–1952 forms a coiled coil; that stretch reads EEELNAKLTR…DKDLEAAMLS (174 aa). In terms of domain architecture, bMERB spans 1799–1948; that stretch reads KQEELKRLHR…EKEEDKDLEA (150 aa). Ser1870 is subject to Phosphoserine.

Belongs to the Mical family. In terms of assembly, interacts with RAB1B, RAB8A, RAB10, RAB13 and RAB15 (in their GTP-bound forms); binding to RAB1B is of low affinity compared to other Rab proteins; at least in case of RAB8A can bind 2 molecules of RAB8A simultaneously through a high and a low affinity binding site, respectively. Interacts with ERC1 and RAB8A; may bridge ERC1 with RAB8A. Interacts with KIF23 and ERC1; enhances the interaction between KIF23 and ERC1. Interacts with NINL. The cofactor is FAD.

It localises to the cytoplasm. Its subcellular location is the cell cortex. The protein localises to the cytoskeleton. It is found in the nucleus. The protein resides in the midbody. It localises to the spindle. Its subcellular location is the cilium basal body. It catalyses the reaction L-methionyl-[F-actin] + NADPH + O2 + H(+) = L-methionyl-(R)-S-oxide-[F-actin] + NADP(+) + H2O. Its function is as follows. Monooxygenase that promotes depolymerization of F-actin by mediating oxidation of specific methionine residues on actin to form methionine-sulfoxide, resulting in actin filament disassembly and preventing repolymerization. In the absence of actin, it also functions as a NADPH oxidase producing H(2)O(2). Seems to act as Rab effector protein and play a role in vesicle trafficking. Involved in exocytic vesicles tethering and fusion: the monooxygenase activity is required for this process and implicates RAB8A associated with exocytotic vesicles. Required for cytokinesis. Contributes to stabilization and/or maturation of the intercellular bridge independently of its monooxygenase activity. Promotes recruitment of Rab8 and ERC1 to the intercellular bridge, and together these proteins are proposed to function in timely abscission. This chain is [F-actin]-monooxygenase MICAL3 (MICAL3), found in Bos taurus (Bovine).